The sequence spans 415 residues: MTELIKKGSAAKEAAQFLAQATTKQKNTALLNLSNDLLAHTSTLLKENEKDILRAQKKGTPETMIDRLRLTEDRMKEISEAVKQVVALKDPIGEVTNMWKNEAELTIGKTRVPLGVIGIIYESRPNVTVDASVLCFKTGNAVILRGGSDAIDSNKALMSVIQDSLEASGFPRSSVQLIEDTSRETARDMMRLNRFLDVLIPRGGARLIQTVLENATVPVIETGTGNCHIYVDKAAEKQMAIDILVNAKCSRPSVCNAAETLLIHRDVAEDYLPAMETALKEYDVELRADERAKEILQEAKAAKESDWEDEFLDFILAVKVVDSAEEAIEHINKYGTKHSEAIISNDYATGQAFHQKVDAAAVYINASTRFTDGFAMGFGAEIGISTQKLHARGPMGLTELTSTKYIIFGDGQIRN.

Belongs to the gamma-glutamyl phosphate reductase family.

The protein localises to the cytoplasm. It carries out the reaction L-glutamate 5-semialdehyde + phosphate + NADP(+) = L-glutamyl 5-phosphate + NADPH + H(+). It participates in amino-acid biosynthesis; L-proline biosynthesis; L-glutamate 5-semialdehyde from L-glutamate: step 2/2. In terms of biological role, catalyzes the NADPH-dependent reduction of L-glutamate 5-phosphate into L-glutamate 5-semialdehyde and phosphate. The product spontaneously undergoes cyclization to form 1-pyrroline-5-carboxylate. This chain is Gamma-glutamyl phosphate reductase, found in Listeria monocytogenes serotype 4a (strain HCC23).